The following is a 215-amino-acid chain: KID-containing protein 1 (215 aa).

Disordered stretches follow at residues 1–132 (MAGG…NKKR) and 150–183 (NPKSMPLLPVHEDNDDEEGDDGDLSDEERGGDVL). The span at 64–81 (DSEEEDEESEEDNDEEEL) shows a compositional bias: acidic residues. The short motif at 129-137 (NKKRRLQIY) is the Nuclear localization signal element. Acidic residues predominate over residues 162-175 (DNDDEEGDDGDLSD). Residues 177-204 (ERGGDVLARRPSFKNRALKSMSCFALSD) form a kinase-inducible domain (KID) region. S188 carries the post-translational modification Phosphoserine; by PKA.

As to quaternary structure, interacts with HDA19; Ser-188 is critical for this interaction. As to expression, strongly expressed in stems, flowers, roots and immature siliques, but not detected in leaf blades of seedlings.

Its subcellular location is the nucleus. Transcription activator which may regulates gene expression through interaction with the histone deacetylase HDA19. The sequence is that of KID-containing protein 1 from Brassica napus (Rape).